A 147-amino-acid polypeptide reads, in one-letter code: MSSEPPPPPQPPTHQTSIGLLDTPRARDRSPSPLRGNVVPSPLPTRRTRTFSATVRASQGPVYKGVCKCFCRSKGHGFITPADGGPDIFLHISDVEGEYVPVEGDEVTYKMCSIPPKNEKLQAVEVVITHLAPGTKHETWSGHVISS.

Residues 1-12 (MSSEPPPPPQPP) are compositionally biased toward pro residues. The tract at residues 1–49 (MSSEPPPPPQPPTHQTSIGLLDTPRARDRSPSPLRGNVVPSPLPTRRTR) is disordered. At Ser-2 the chain carries N-acetylserine. Phosphoserine occurs at positions 30, 32, and 41. Thr-45 is subject to Phosphothreonine. Phosphoserine occurs at positions 52 and 58. Residues 62–129 (VYKGVCKCFC…KLQAVEVVIT (68 aa)) form the CSD domain. Phosphoserine occurs at positions 146 and 147.

In terms of assembly, homodimer. Interacts with STYX. In terms of processing, can be phosphorylated by DYRK2 (in vitro). Dephosphorylated by calcineurin in a Ca(2+) dependent manner, and probably by PP2A or PP4 serine phosphatases in cAMP- and PKC-mediated pathways. As to expression, widely expressed.

The protein resides in the cytoplasm. It is found in the P-body. The protein localises to the cytoplasmic granule. Binds mRNA and regulates the stability of target mRNA. This chain is Calcium-regulated heat stable protein 1 (Carhsp1), found in Rattus norvegicus (Rat).